The following is a 408-amino-acid chain: 1-deoxy-D-xylulose 5-phosphate reductoisomerase (408 aa).

Positions 27, 28, 29, 30, 53, 54, 55, and 140 each coordinate NADPH. Position 141 (K141) interacts with 1-deoxy-D-xylulose 5-phosphate. NADPH is bound at residue E142. Residue D166 coordinates Mn(2+). Residues S167, E168, S192, and H215 each contribute to the 1-deoxy-D-xylulose 5-phosphate site. Mn(2+) is bound at residue E168. G221 lines the NADPH pocket. Residues S228, N233, K234, and E237 each coordinate 1-deoxy-D-xylulose 5-phosphate. E237 is a binding site for Mn(2+).

Belongs to the DXR family. Mg(2+) serves as cofactor. It depends on Mn(2+) as a cofactor.

It carries out the reaction 2-C-methyl-D-erythritol 4-phosphate + NADP(+) = 1-deoxy-D-xylulose 5-phosphate + NADPH + H(+). It participates in isoprenoid biosynthesis; isopentenyl diphosphate biosynthesis via DXP pathway; isopentenyl diphosphate from 1-deoxy-D-xylulose 5-phosphate: step 1/6. Catalyzes the NADPH-dependent rearrangement and reduction of 1-deoxy-D-xylulose-5-phosphate (DXP) to 2-C-methyl-D-erythritol 4-phosphate (MEP). This is 1-deoxy-D-xylulose 5-phosphate reductoisomerase from Nitratidesulfovibrio vulgaris (strain ATCC 29579 / DSM 644 / CCUG 34227 / NCIMB 8303 / VKM B-1760 / Hildenborough) (Desulfovibrio vulgaris).